We begin with the raw amino-acid sequence, 333 residues long: Ketol-acid reductoisomerase (NADP(+)) (333 aa).

A KARI N-terminal Rossmann domain is found at 2-182; that stretch reads ANIYYDDSCD…GGGRAGILET (181 aa). NADP(+)-binding positions include 25–28, R48, S51, S53, and 83–86; these read YGSQ and DTIQ. The active site involves H108. G134 is an NADP(+) binding site. The KARI C-terminal knotted domain occupies 183–331; that stretch reads SFREETETDL…TKLRSMMKWL (149 aa). The Mg(2+) site is built by D191, E195, E227, and E231. S252 contacts substrate.

Belongs to the ketol-acid reductoisomerase family. Requires Mg(2+) as cofactor.

It catalyses the reaction (2R)-2,3-dihydroxy-3-methylbutanoate + NADP(+) = (2S)-2-acetolactate + NADPH + H(+). It carries out the reaction (2R,3R)-2,3-dihydroxy-3-methylpentanoate + NADP(+) = (S)-2-ethyl-2-hydroxy-3-oxobutanoate + NADPH + H(+). Its pathway is amino-acid biosynthesis; L-isoleucine biosynthesis; L-isoleucine from 2-oxobutanoate: step 2/4. The protein operates within amino-acid biosynthesis; L-valine biosynthesis; L-valine from pyruvate: step 2/4. Involved in the biosynthesis of branched-chain amino acids (BCAA). Catalyzes an alkyl-migration followed by a ketol-acid reduction of (S)-2-acetolactate (S2AL) to yield (R)-2,3-dihydroxy-isovalerate. In the isomerase reaction, S2AL is rearranged via a Mg-dependent methyl migration to produce 3-hydroxy-3-methyl-2-ketobutyrate (HMKB). In the reductase reaction, this 2-ketoacid undergoes a metal-dependent reduction by NADPH to yield (R)-2,3-dihydroxy-isovalerate. The polypeptide is Ketol-acid reductoisomerase (NADP(+)) (Leptospira biflexa serovar Patoc (strain Patoc 1 / Ames)).